Here is a 165-residue protein sequence, read N- to C-terminus: V-type proton ATPase 16 kDa proteolipid subunit (165 aa).

The Lumenal portion of the chain corresponds to Met1 to Pro12. A helical transmembrane segment spans residues Phe13–Gly33. Residues Thr34 to Ser55 lie on the Cytoplasmic side of the membrane. The helical transmembrane segment at Ile56–Ile76 threads the bilayer. Residues Ser77–His95 are Lumenal-facing. Residues Leu96–Gly117 traverse the membrane as a helical segment. Residues Asp118–Lys129 are Cytoplasmic-facing. Residues Leu130–Leu155 traverse the membrane as a helical segment. Residues Ser156 to Asp165 lie on the Lumenal side of the membrane.

Belongs to the V-ATPase proteolipid subunit family. In terms of assembly, V-ATPase is a heteromultimeric enzyme composed of a peripheral catalytic V1 complex (main components: subunits A, B, C, D, E, and F) attached to an integral membrane V0 proton pore complex (main component: the proteolipid protein; which is present as a hexamer that forms the proton-conducting pore).

It localises to the vacuole membrane. Proton-conducting pore forming subunit of the membrane integral V0 complex of vacuolar ATPase. V-ATPase is responsible for acidifying a variety of intracellular compartments in eukaryotic cells. The polypeptide is V-type proton ATPase 16 kDa proteolipid subunit (VMAC1) (Mesembryanthemum crystallinum (Common ice plant)).